The following is a 33-amino-acid chain: Beta-theraphotoxin-Cm1a (33 aa).

3 disulfide bridges follow: C2-C17, C9-C22, and C16-C29. At L33 the chain carries Leucine amide.

It belongs to the neurotoxin 10 (Hwtx-1) family. 04 (CcoTx1) subfamily. Expressed by the venom gland.

The protein localises to the secreted. Inhibits many voltage-gated sodium channels and one voltage-gated calcium channel (Cav2.2/CACNA1B (IC(50)=400 nM), Nav1.2/SCN2A (IC(50)=3-70 nM), Nav1.1/SCN1A (IC(50)=523-1060 nM), Nav1.7/SCN9A (IC(50)=129.1-5120 nM), Nav1.4/SCN4A (IC(50)=263-888 nM or &gt;10 uM) and Nav1.5/SCN5A (IC(50)=188-323 nM or &gt;10 uM)). It acts by shifting the voltage dependence of channel activation to more depolarized potentials and by blocking the inward component of the sodium current. It shows moderate affinity for lipid bilayers. On Nav1.7/SCN9A, it has been shown to interact with the S3-S4 loop of domain DII (site 4). Is significantly more potent against Nav1.2/SCN2A than the other Nav channel subtypes. In vivo, this toxin causes general ataxia, lack of response to stimuli, and semiparalysis. After a few minutes, the mice are unable to stand, and breathing is reduced in rhythm and intensity. Symptoms gradually increase with progressive slowing of breathing and flaccid paralysis, death occurred within 10 to 20 minutes post injection. Animals remain totally flaccid, and no symptoms of excitatory neurotoxicity are observed. This chain is Beta-theraphotoxin-Cm1a, found in Ceratogyrus marshalli (Straighthorned baboon tarantula).